The primary structure comprises 1269 residues: Histone-lysine N-methyltransferase SETDB1 (1269 aa).

Positions 9–63 (KELGISMDDLRELIDRELEKIEFVKQRKAQLLEMEQLVKQKEAEVDHVDKLFDNA) form a coiled coil. Disordered regions lie at residues 85-121 (YKES…GEAV) and 153-188 (QKKS…DMSK). The span at 103–112 (EIPDEDDDDV) shows a compositional bias: acidic residues. Low complexity predominate over residues 164–177 (SSHPSSPTSSVGGS). Tudor domains lie at 250–312 (ENLT…RPWS) and 340–395 (VLLK…MFSM). Polar residues predominate over residues 396 to 414 (KTSNASTQEKQQAGQQRTR). The interval 396–516 (KTSNASTQEK…FQSNQSVQPV (121 aa)) is disordered. The span at 462–476 (DSQQAQSKKQVAKKS) shows a compositional bias: low complexity. Residues 486–497 (SGQSSPIPTESV) are compositionally biased toward polar residues. The 72-residue stretch at 620-691 (HRGKNPLLVP…EMFCLDPYVL (72 aa)) folds into the MBD domain. The region spanning 753–826 (VGCDCTDGCR…MCNNRLVQHG (74 aa)) is the Pre-SET domain. Zn(2+)-binding residues include Cys-755, Cys-757, Cys-761, Cys-767, Cys-769, Cys-807, Cys-811, Cys-813, and Cys-818. The SET domain occupies 829-1244 (VRLQLFKTQN…AGTELTWDYN (416 aa)). S-adenosyl-L-methionine contacts are provided by residues 839 to 841 (KGW), Asp-877, and Tyr-879. Residues 894–1139 (EGYESDAKSS…VAASAGPVKR (246 aa)) are disordered. Residues 919–932 (SGSEDQEESNDSSD) are compositionally biased toward acidic residues. Composition is skewed to basic and acidic residues over residues 968-989 (ASKD…ETSK) and 1021-1033 (ETDK…EASK). A compositionally biased stretch (low complexity) spans 1078-1094 (TEEVLTLSSSSDSEVGS). Residues 1106–1120 (ATANDSDDIQTISSG) show a composition bias toward polar residues. Residues Arg-1198 and 1201–1202 (NH) each bind S-adenosyl-L-methionine. Positions 1204, 1257, 1259, and 1264 each coordinate Zn(2+). In terms of domain architecture, Post-SET spans 1253–1269 (KKLLCCCGSTECRGRLL).

It belongs to the class V-like SAM-binding methyltransferase superfamily. Histone-lysine methyltransferase family. Suvar3-9 subfamily.

It localises to the nucleus. The protein localises to the chromosome. It catalyses the reaction N(6),N(6)-dimethyl-L-lysyl(9)-[histone H3] + S-adenosyl-L-methionine = N(6),N(6),N(6)-trimethyl-L-lysyl(9)-[histone H3] + S-adenosyl-L-homocysteine + H(+). In terms of biological role, histone methyltransferase that specifically trimethylates 'Lys-9' of histone H3. H3 'Lys-9' trimethylation represents a specific tag for epigenetic transcriptional repression by recruiting HP1 (CBX1, CBX3 and/or CBX5) proteins to methylated histones. Mainly functions in euchromatin regions, thereby playing a central role in the silencing of euchromatic genes. H3 'Lys-9' trimethylation is coordinated with DNA methylation. Plays a role in promoter hypermethylation and transcriptional silencing of tumor suppressor genes (TSGs) or other tumor-related genes. Also required to maintain a transcriptionally repressive state of genes in undifferentiated embryonic stem cells (ESCs). Associates at promoter regions of tumor suppressor genes (TSGs) leading to their gene silencing. In Xenopus laevis (African clawed frog), this protein is Histone-lysine N-methyltransferase SETDB1 (setdb1).